Reading from the N-terminus, the 160-residue chain is Cyclic pyranopterin monophosphate synthase (160 aa).

Substrate-binding positions include 77 to 79 (LCH) and 114 to 115 (ME). Asp-129 is an active-site residue.

The protein belongs to the MoaC family. As to quaternary structure, homohexamer; trimer of dimers.

It catalyses the reaction (8S)-3',8-cyclo-7,8-dihydroguanosine 5'-triphosphate = cyclic pyranopterin phosphate + diphosphate. It functions in the pathway cofactor biosynthesis; molybdopterin biosynthesis. Catalyzes the conversion of (8S)-3',8-cyclo-7,8-dihydroguanosine 5'-triphosphate to cyclic pyranopterin monophosphate (cPMP). This Alcanivorax borkumensis (strain ATCC 700651 / DSM 11573 / NCIMB 13689 / SK2) protein is Cyclic pyranopterin monophosphate synthase.